A 126-amino-acid chain; its full sequence is Histone H2B type 1-P (126 aa).

Residues 1–36 (MPEPVKSVPAPKKGSKKAVTKAQKKDGKKRKRSRKE) form a disordered region. Residue proline 2 is modified to N-acetylproline. At glutamate 3 the chain carries ADP-ribosyl glutamic acid. An N6-(2-hydroxyisobutyryl)lysine; alternate modification is found at lysine 6. At lysine 6 the chain carries N6-(beta-hydroxybutyryl)lysine; alternate. N6-acetyllysine; alternate is present on lysine 6. Residue lysine 6 is modified to N6-butyryllysine; alternate. Lysine 6 carries the N6-crotonyllysine; alternate modification. Residue lysine 6 is modified to N6-lactoyllysine; alternate. Residue lysine 6 forms a Glycyl lysine isopeptide (Lys-Gly) (interchain with G-Cter in SUMO2); alternate linkage. Serine 7 carries the post-translational modification ADP-ribosylserine. N6-(beta-hydroxybutyryl)lysine; alternate is present on lysine 12. Lysine 12 and lysine 13 each carry N6-acetyllysine; alternate. An N6-crotonyllysine; alternate mark is found at lysine 12 and lysine 13. At lysine 12 the chain carries N6-lactoyllysine; alternate. Lysine 13 carries the post-translational modification N6-(2-hydroxyisobutyryl)lysine; alternate. Serine 15 is subject to Phosphoserine; by STK4/MST1. N6-acetyllysine; alternate is present on residues lysine 16, lysine 17, lysine 21, and lysine 24. Lysine 16, lysine 17, lysine 21, and lysine 24 each carry N6-crotonyllysine; alternate. Residues lysine 16, lysine 17, lysine 21, and lysine 24 each carry the N6-lactoyllysine; alternate modification. Position 17 is an N6-glutaryllysine; alternate (lysine 17). Residues lysine 21 and lysine 24 each carry the N6-(2-hydroxyisobutyryl)lysine; alternate modification. The residue at position 21 (lysine 21) is an N6-(beta-hydroxybutyryl)lysine; alternate. Lysine 21 is subject to N6-butyryllysine; alternate. Residue lysine 21 forms a Glycyl lysine isopeptide (Lys-Gly) (interchain with G-Cter in SUMO2); alternate linkage. The residue at position 25 (lysine 25) is an N6-(2-hydroxyisobutyryl)lysine. Position 35 is an N6-(2-hydroxyisobutyryl)lysine; alternate (lysine 35). The residue at position 35 (lysine 35) is an N6-(beta-hydroxybutyryl)lysine; alternate. Lysine 35 carries the post-translational modification N6-crotonyllysine; alternate. The residue at position 35 (lysine 35) is an N6-glutaryllysine; alternate. Lysine 35 is subject to N6-succinyllysine; alternate. Lysine 35 is covalently cross-linked (Glycyl lysine isopeptide (Lys-Gly) (interchain with G-Cter in ubiquitin); alternate). Glutamate 36 is subject to PolyADP-ribosyl glutamic acid. Serine 37 carries the post-translational modification Phosphoserine; by AMPK. Residues lysine 44, lysine 47, and lysine 58 each carry the N6-(2-hydroxyisobutyryl)lysine; alternate modification. Lysine 44 carries the post-translational modification N6-lactoyllysine; alternate. N6-glutaryllysine; alternate is present on residues lysine 44 and lysine 47. The residue at position 47 (lysine 47) is an N6-methyllysine; alternate. Lysine 58 carries the post-translational modification N6,N6-dimethyllysine; alternate. Position 80 is a dimethylated arginine (arginine 80). Residue lysine 86 is modified to N6-(2-hydroxyisobutyryl)lysine; alternate. The residue at position 86 (lysine 86) is an N6-acetyllysine; alternate. The residue at position 86 (lysine 86) is an N6-lactoyllysine; alternate. Lysine 86 carries the N6,N6,N6-trimethyllysine; alternate modification. An omega-N-methylarginine mark is found at arginine 87 and arginine 93. The residue at position 109 (lysine 109) is an N6-(2-hydroxyisobutyryl)lysine; alternate. Position 109 is an N6-(beta-hydroxybutyryl)lysine; alternate (lysine 109). Residue lysine 109 is modified to N6-lactoyllysine; alternate. Lysine 109 is modified (N6-glutaryllysine; alternate). Lysine 109 carries the post-translational modification N6-methyllysine; alternate. O-linked (GlcNAc) serine glycosylation is present at serine 113. Threonine 116 bears the Phosphothreonine mark. 2 positions are modified to N6-(2-hydroxyisobutyryl)lysine; alternate: lysine 117 and lysine 121. The residue at position 117 (lysine 117) is an N6-(beta-hydroxybutyryl)lysine; alternate. N6-lactoyllysine; alternate occurs at positions 117 and 121. N6-glutaryllysine; alternate occurs at positions 117 and 121. Lysine 117 and lysine 121 each carry N6-succinyllysine; alternate. At lysine 117 the chain carries N6-methylated lysine; alternate. A Glycyl lysine isopeptide (Lys-Gly) (interchain with G-Cter in ubiquitin); alternate cross-link involves residue lysine 121.

The protein belongs to the histone H2B family. The nucleosome is a histone octamer containing two molecules each of H2A, H2B, H3 and H4 assembled in one H3-H4 heterotetramer and two H2A-H2B heterodimers. The octamer wraps approximately 147 bp of DNA. Monoubiquitination at Lys-35 (H2BK34Ub) by the MSL1/MSL2 dimer is required for histone H3 'Lys-4' (H3K4me) and 'Lys-79' (H3K79me) methylation and transcription activation at specific gene loci, such as HOXA9 and MEIS1 loci. Similarly, monoubiquitination at Lys-121 (H2BK120Ub) by the RNF20/40 complex gives a specific tag for epigenetic transcriptional activation and is also prerequisite for histone H3 'Lys-4' and 'Lys-79' methylation. It also functions cooperatively with the FACT dimer to stimulate elongation by RNA polymerase II. H2BK120Ub also acts as a regulator of mRNA splicing: deubiquitination by USP49 is required for efficient cotranscriptional splicing of a large set of exons. In terms of processing, phosphorylated on Ser-15 (H2BS14ph) by STK4/MST1 during apoptosis; which facilitates apoptotic chromatin condensation. Also phosphorylated on Ser-15 in response to DNA double strand breaks (DSBs), and in correlation with somatic hypermutation and immunoglobulin class-switch recombination. Phosphorylation at Ser-37 (H2BS36ph) by AMPK in response to stress promotes transcription. Post-translationally, glcNAcylation at Ser-113 promotes monoubiquitination of Lys-121. It fluctuates in response to extracellular glucose, and associates with transcribed genes. ADP-ribosylated by PARP1 or PARP2 on Ser-7 (H2BS6ADPr) in response to DNA damage. H2BS6ADPr promotes recruitment of CHD1L. Mono-ADP-ribosylated on Glu-3 (H2BE2ADPr) by PARP3 in response to single-strand breaks. Poly ADP-ribosylation on Glu-36 (H2BE35ADPr) by PARP1 regulates adipogenesis: it inhibits phosphorylation at Ser-37 (H2BS36ph), thereby blocking expression of pro-adipogenetic genes. In terms of processing, crotonylation (Kcr) is specifically present in male germ cells and marks testis-specific genes in post-meiotic cells, including X-linked genes that escape sex chromosome inactivation in haploid cells. Crotonylation marks active promoters and enhancers and confers resistance to transcriptional repressors. It is also associated with post-meiotically activated genes on autosomes. Post-translationally, hydroxybutyrylation of histones is induced by starvation. Lactylated in macrophages by EP300/P300 by using lactoyl-CoA directly derived from endogenous or exogenous lactate, leading to stimulates gene transcription.

Its subcellular location is the nucleus. It localises to the chromosome. In terms of biological role, core component of nucleosome. Nucleosomes wrap and compact DNA into chromatin, limiting DNA accessibility to the cellular machineries which require DNA as a template. Histones thereby play a central role in transcription regulation, DNA repair, DNA replication and chromosomal stability. DNA accessibility is regulated via a complex set of post-translational modifications of histones, also called histone code, and nucleosome remodeling. This is Histone H2B type 1-P (Hist1h2bp) from Mus musculus (Mouse).